The following is a 403-amino-acid chain: RILP-like protein 1 (403 aa).

The residue at position 7 (Ser-7) is a Phosphoserine. The region spanning 10 to 97 (AAESALEKNV…RLERMDRIEK (88 aa)) is the RH1 domain. Cys-47 is modified (S-nitrosocysteine). Residues 76 to 258 (ELDELRLELD…KLRERLQGEH (183 aa)) are a coiled coil. 3 disordered regions span residues 254-275 (LQGEHSQNGEEEPETEPVGEES), 327-352 (EMEEENRIPQPPPIAHPRTSPQPESG), and 384-403 (ANTHRDDGYTEQGQEALQHL). Ser-259 carries the post-translational modification Phosphoserine. Acidic residues predominate over residues 262–275 (GEEEPETEPVGEES). Residues 291 to 356 (RPRFTLQELR…PQPESGIKRL (66 aa)) enclose the RH2 domain. The segment covering 394 to 403 (EQGQEALQHL) has biased composition (polar residues).

This sequence belongs to the RILPL family. In terms of assembly, interacts (when S-nitrosylated) with GAPDH. Interacts with RAB8A; interaction is dependent on the phosphorylation of 'Thr-72' of RAB8A. Interacts with RAB10 and RAB12; the interaction is dependent on the phosphorylation of 'Thr-73' of RAB10, and 'Ser-105' of RAB12. S-nitrosylation is required for the interaction with GAPDH. In terms of tissue distribution, widely expressed. Expressed at lower level in liver and kidney.

The protein resides in the cytoplasm. It is found in the cytosol. Its subcellular location is the cytoskeleton. It localises to the microtubule organizing center. The protein localises to the centrosome. The protein resides in the centriole. It is found in the cilium basal body. Its function is as follows. Plays a role in the regulation of cell shape and polarity. Plays a role in cellular protein transport, including protein transport away from primary cilia. Neuroprotective protein, which acts by sequestring GAPDH in the cytosol and prevent the apoptotic function of GAPDH in the nucleus. Competes with SIAH1 for binding GAPDH. Does not regulate lysosomal morphology and distribution. Binds to RAB10 following LRRK2-mediated RAB10 phosphorylation which leads to inhibition of ciliogenesis. The sequence is that of RILP-like protein 1 (RILPL1) from Homo sapiens (Human).